The primary structure comprises 173 residues: Crossover junction endodeoxyribonuclease RuvC (173 aa).

Catalysis depends on residues Asp11, Glu71, and Asp143. Mg(2+)-binding residues include Asp11, Glu71, and Asp143.

This sequence belongs to the RuvC family. In terms of assembly, homodimer which binds Holliday junction (HJ) DNA. The HJ becomes 2-fold symmetrical on binding to RuvC with unstacked arms; it has a different conformation from HJ DNA in complex with RuvA. In the full resolvosome a probable DNA-RuvA(4)-RuvB(12)-RuvC(2) complex forms which resolves the HJ. Mg(2+) is required as a cofactor.

It localises to the cytoplasm. The catalysed reaction is Endonucleolytic cleavage at a junction such as a reciprocal single-stranded crossover between two homologous DNA duplexes (Holliday junction).. Functionally, the RuvA-RuvB-RuvC complex processes Holliday junction (HJ) DNA during genetic recombination and DNA repair. Endonuclease that resolves HJ intermediates. Cleaves cruciform DNA by making single-stranded nicks across the HJ at symmetrical positions within the homologous arms, yielding a 5'-phosphate and a 3'-hydroxyl group; requires a central core of homology in the junction. The consensus cleavage sequence is 5'-(A/T)TT(C/G)-3'. Cleavage occurs on the 3'-side of the TT dinucleotide at the point of strand exchange. HJ branch migration catalyzed by RuvA-RuvB allows RuvC to scan DNA until it finds its consensus sequence, where it cleaves and resolves the cruciform DNA. The polypeptide is Crossover junction endodeoxyribonuclease RuvC (Brucella abortus (strain 2308)).